Consider the following 184-residue polypeptide: Small ribosomal subunit protein uS4c (184 aa).

An S4 RNA-binding domain is found at Met-82–Asn-143.

It belongs to the universal ribosomal protein uS4 family. As to quaternary structure, part of the 30S ribosomal subunit. Contacts protein S5. The interaction surface between S4 and S5 is involved in control of translational fidelity.

It localises to the plastid. It is found in the chloroplast. Its function is as follows. One of the primary rRNA binding proteins, it binds directly to 16S rRNA where it nucleates assembly of the body of the 30S subunit. In terms of biological role, with S5 and S12 plays an important role in translational accuracy. This Patersonia fragilis (Short purple-flag) protein is Small ribosomal subunit protein uS4c (rps4).